We begin with the raw amino-acid sequence, 456 residues long: tRNA-2-methylthio-N(6)-dimethylallyladenosine synthase (456 aa).

Positions 13–129 constitute an MTTase N-terminal domain; the sequence is RYLYVRTFGC…IASLLEEVER (117 aa). 6 residues coordinate [4Fe-4S] cluster: Cys22, Cys58, Cys92, Cys168, Cys172, and Cys175. The region spanning 154–384 is the Radical SAM core domain; that stretch reads GTGDVVAQVT…QSIQADITLQ (231 aa). Residues 387-450 enclose the TRAM domain; it reads LAETGTVREV…SHSLKGELLS (64 aa).

The protein belongs to the methylthiotransferase family. MiaB subfamily. Monomer. The cofactor is [4Fe-4S] cluster.

The protein resides in the cytoplasm. It catalyses the reaction N(6)-dimethylallyladenosine(37) in tRNA + (sulfur carrier)-SH + AH2 + 2 S-adenosyl-L-methionine = 2-methylsulfanyl-N(6)-dimethylallyladenosine(37) in tRNA + (sulfur carrier)-H + 5'-deoxyadenosine + L-methionine + A + S-adenosyl-L-homocysteine + 2 H(+). Catalyzes the methylthiolation of N6-(dimethylallyl)adenosine (i(6)A), leading to the formation of 2-methylthio-N6-(dimethylallyl)adenosine (ms(2)i(6)A) at position 37 in tRNAs that read codons beginning with uridine. The polypeptide is tRNA-2-methylthio-N(6)-dimethylallyladenosine synthase (Syntrophobacter fumaroxidans (strain DSM 10017 / MPOB)).